A 178-amino-acid polypeptide reads, in one-letter code: Acireductone dioxygenase (178 aa).

Residues His-100, His-102, Glu-106, and His-145 each coordinate Fe(2+). His-100, His-102, Glu-106, and His-145 together coordinate Ni(2+).

Belongs to the acireductone dioxygenase (ARD) family. In terms of assembly, monomer. Requires Fe(2+) as cofactor. Ni(2+) is required as a cofactor.

It carries out the reaction 1,2-dihydroxy-5-(methylsulfanyl)pent-1-en-3-one + O2 = 3-(methylsulfanyl)propanoate + CO + formate + 2 H(+). It catalyses the reaction 1,2-dihydroxy-5-(methylsulfanyl)pent-1-en-3-one + O2 = 4-methylsulfanyl-2-oxobutanoate + formate + 2 H(+). It participates in amino-acid biosynthesis; L-methionine biosynthesis via salvage pathway; L-methionine from S-methyl-5-thio-alpha-D-ribose 1-phosphate: step 5/6. Catalyzes 2 different reactions between oxygen and the acireductone 1,2-dihydroxy-3-keto-5-methylthiopentene (DHK-MTPene) depending upon the metal bound in the active site. Fe-containing acireductone dioxygenase (Fe-ARD) produces formate and 2-keto-4-methylthiobutyrate (KMTB), the alpha-ketoacid precursor of methionine in the methionine recycle pathway. Ni-containing acireductone dioxygenase (Ni-ARD) produces methylthiopropionate, carbon monoxide and formate, and does not lie on the methionine recycle pathway. The chain is Acireductone dioxygenase (mtnD) from Bacillus subtilis (strain 168).